We begin with the raw amino-acid sequence, 302 residues long: UDP-N-acetylenolpyruvoylglucosamine reductase (302 aa).

In terms of domain architecture, FAD-binding PCMH-type spans Ile30–Gly196. Residue Arg174 is part of the active site. The Proton donor role is filled by Ser225. Residue Glu295 is part of the active site.

Belongs to the MurB family. The cofactor is FAD.

The protein localises to the cytoplasm. The catalysed reaction is UDP-N-acetyl-alpha-D-muramate + NADP(+) = UDP-N-acetyl-3-O-(1-carboxyvinyl)-alpha-D-glucosamine + NADPH + H(+). It participates in cell wall biogenesis; peptidoglycan biosynthesis. Its function is as follows. Cell wall formation. This Anoxybacillus flavithermus (strain DSM 21510 / WK1) protein is UDP-N-acetylenolpyruvoylglucosamine reductase.